Reading from the N-terminus, the 94-residue chain is ATP synthase F(0) complex subunit f, mitochondrial (94 aa).

Alanine 2 bears the N-acetylalanine mark. Serine 3 bears the Phosphoserine mark. Lysine 22 carries the N6-acetyllysine modification. The chain crosses the membrane as a helical span at residues 68-85 (MVLACYVLFSYSFSYKHL).

It belongs to the ATPase F chain family. Component of the ATP synthase complex composed at least of ATP5F1A/subunit alpha, ATP5F1B/subunit beta, ATP5MC1/subunit c (homooctomer), MT-ATP6/subunit a, MT-ATP8/subunit 8, ATP5ME/subunit e, ATP5MF/subunit f, ATP5MG/subunit g, ATP5MK/subunit k, ATP5MJ/subunit j, ATP5F1C/subunit gamma, ATP5F1D/subunit delta, ATP5F1E/subunit epsilon, ATP5PF/subunit F6, ATP5PB/subunit b, ATP5PD/subunit d, ATP5PO/subunit OSCP. ATP synthase complex consists of a soluble F(1) head domain (subunits alpha(3) and beta(3)) - the catalytic core - and a membrane F(0) domain - the membrane proton channel (subunits c, a, 8, e, f, g, k and j). These two domains are linked by a central stalk (subunits gamma, delta, and epsilon) rotating inside the F1 region and a stationary peripheral stalk (subunits F6, b, d, and OSCP).

Its subcellular location is the mitochondrion. The protein resides in the mitochondrion inner membrane. In terms of biological role, subunit f, of the mitochondrial membrane ATP synthase complex (F(1)F(0) ATP synthase or Complex V) that produces ATP from ADP in the presence of a proton gradient across the membrane which is generated by electron transport complexes of the respiratory chain. ATP synthase complex consist of a soluble F(1) head domain - the catalytic core - and a membrane F(1) domain - the membrane proton channel. These two domains are linked by a central stalk rotating inside the F(1) region and a stationary peripheral stalk. During catalysis, ATP synthesis in the catalytic domain of F(1) is coupled via a rotary mechanism of the central stalk subunits to proton translocation. In vivo, can only synthesize ATP although its ATP hydrolase activity can be activated artificially in vitro. Part of the complex F(0) domain. The chain is ATP synthase F(0) complex subunit f, mitochondrial from Pongo abelii (Sumatran orangutan).